Here is a 200-residue protein sequence, read N- to C-terminus: Large ribosomal subunit protein uL4 (200 aa).

The interval 43-71 (RAQKTRAEVSGSGKKPWRQKGTGRARSGD) is disordered.

It belongs to the universal ribosomal protein uL4 family. In terms of assembly, part of the 50S ribosomal subunit.

One of the primary rRNA binding proteins, this protein initially binds near the 5'-end of the 23S rRNA. It is important during the early stages of 50S assembly. It makes multiple contacts with different domains of the 23S rRNA in the assembled 50S subunit and ribosome. In terms of biological role, forms part of the polypeptide exit tunnel. The polypeptide is Large ribosomal subunit protein uL4 (Mannheimia succiniciproducens (strain KCTC 0769BP / MBEL55E)).